Here is an 87-residue protein sequence, read N- to C-terminus: Large ribosomal subunit protein bL31B (87 aa).

It belongs to the bacterial ribosomal protein bL31 family. Type B subfamily. As to quaternary structure, part of the 50S ribosomal subunit.

This chain is Large ribosomal subunit protein bL31B, found in Burkholderia pseudomallei (strain 1106a).